The sequence spans 82 residues: Sec-independent protein translocase protein TatA (82 aa).

Residues 1–21 (MHPPSITQLLIILLIIVLLFG) traverse the membrane as a helical segment. The disordered stretch occupies residues 42 to 82 (AVKEDEEDNQSEENTKSQIKQSESKNENVSKTHTDSQKQDT). Residues 63 to 82 (SESKNENVSKTHTDSQKQDT) show a composition bias toward basic and acidic residues.

The protein belongs to the TatA/E family. In terms of assembly, the Tat system comprises two distinct complexes: a TatABC complex, containing multiple copies of TatA, TatB and TatC subunits, and a separate TatA complex, containing only TatA subunits. Substrates initially bind to the TatABC complex, which probably triggers association of the separate TatA complex to form the active translocon.

Its subcellular location is the cell inner membrane. Part of the twin-arginine translocation (Tat) system that transports large folded proteins containing a characteristic twin-arginine motif in their signal peptide across membranes. TatA could form the protein-conducting channel of the Tat system. This chain is Sec-independent protein translocase protein TatA, found in Helicobacter hepaticus (strain ATCC 51449 / 3B1).